The following is a 149-amino-acid chain: Deoxyuridine 5'-triphosphate nucleotidohydrolase (149 aa).

Substrate is bound by residues 68–70 (RSG), asparagine 81, and 85–87 (LID).

This sequence belongs to the dUTPase family. Mg(2+) serves as cofactor.

The enzyme catalyses dUTP + H2O = dUMP + diphosphate + H(+). It functions in the pathway pyrimidine metabolism; dUMP biosynthesis; dUMP from dCTP (dUTP route): step 2/2. This enzyme is involved in nucleotide metabolism: it produces dUMP, the immediate precursor of thymidine nucleotides and it decreases the intracellular concentration of dUTP so that uracil cannot be incorporated into DNA. In Nitrosospira multiformis (strain ATCC 25196 / NCIMB 11849 / C 71), this protein is Deoxyuridine 5'-triphosphate nucleotidohydrolase.